The sequence spans 276 residues: Apulose-4-phosphate transketolase subunit A (276 aa).

The protein belongs to the transketolase family. Probable heterodimer composed of AptA and AptB. Thiamine diphosphate is required as a cofactor.

The enzyme catalyses apulose 4-phosphate + D-glyceraldehyde 3-phosphate = D-xylulose 5-phosphate + dihydroxyacetone phosphate. It participates in carbohydrate metabolism. Functionally, involved in catabolism of D-apiose. Catalyzes the transfer of the glycolaldehyde group from apulose-4-phosphate to D-glyceraldehyde 3-phosphate, generating dihydroxyacetone phosphate and D-xylulose-5-phosphate. The sequence is that of Apulose-4-phosphate transketolase subunit A from Actinobacillus succinogenes (strain ATCC 55618 / DSM 22257 / CCUG 43843 / 130Z).